The chain runs to 427 residues: Septin-8-B (427 aa).

The region spanning 39–305 is the Septin-type G domain; the sequence is QGFCFNILCV…ELYRRCKLEE (267 aa). The interval 49–56 is G1 motif; the sequence is GETGIGKS. GTP is bound by residues 49 to 56, Gly104, 185 to 193, Gly239, and Arg254; these read GETGIGKS and KADTISKSE. Residues 101–104 form a G3 motif region; it reads DTVG. The tract at residues 184–187 is G4 motif; it reads AKAD. A coiled-coil region spans residues 320-407; sequence LQETYEAKRK…RRKVAMETLQ (88 aa). Residues 406–418 show a composition bias toward polar residues; the sequence is LQSQSFQATSQQP. A disordered region spans residues 406 to 427; it reads LQSQSFQATSQQPLKKDKDRKN.

It belongs to the TRAFAC class TrmE-Era-EngA-EngB-Septin-like GTPase superfamily. Septin GTPase family.

The polypeptide is Septin-8-B (sept8-b) (Xenopus laevis (African clawed frog)).